Consider the following 151-residue polypeptide: Endoribonuclease YbeY (151 aa).

H113, H117, and H123 together coordinate Zn(2+).

This sequence belongs to the endoribonuclease YbeY family. Zn(2+) is required as a cofactor.

Its subcellular location is the cytoplasm. In terms of biological role, single strand-specific metallo-endoribonuclease involved in late-stage 70S ribosome quality control and in maturation of the 3' terminus of the 16S rRNA. The chain is Endoribonuclease YbeY from Polaromonas naphthalenivorans (strain CJ2).